The sequence spans 953 residues: Coatomer subunit beta-1 (953 aa).

5 HEAT repeats span residues 49 to 87 (ETLPHLFITVVRYVLPSEDHTIQKLLLLYLEIVDKRDVA), 93 to 127 (PEMILICQNLRNNLQHPNEYIRGVTLRFLCRLNEP), 128 to 165 (ELLEPLIPSILANLDHRHHFIRRHALSAISAIYRLPHG), 314 to 351 (DVMVDVVMDVLRALSSPNVDVRRKVLDLVLDLLTPRNV), and 393 to 430 (EVAGSVVHLLMDFLGDTNVAAAVDVVLFVREIIETNPK).

In terms of assembly, oligomeric complex that consists of at least the alpha, beta, beta', gamma, delta, epsilon and zeta subunits.

The protein localises to the cytoplasm. It is found in the golgi apparatus membrane. It localises to the cytoplasmic vesicle. Its subcellular location is the COPI-coated vesicle membrane. The coatomer is a cytosolic protein complex that binds to dilysine motifs and reversibly associates with Golgi non-clathrin-coated vesicles, which further mediate biosynthetic protein transport from the ER, via the Golgi up to the trans Golgi network. Coatomer complex is required for budding from Golgi membranes, and is essential for the retrograde Golgi-to-ER transport of dilysine-tagged proteins. The chain is Coatomer subunit beta-1 from Oryza sativa subsp. japonica (Rice).